The sequence spans 119 residues: Small ribosomal subunit protein uS10 (119 aa).

Ala-2 is modified (N-acetylalanine). Residue Lys-4 forms a Glycyl lysine isopeptide (Lys-Gly) (interchain with G-Cter in ubiquitin) linkage. Position 8 is an N6-succinyllysine; alternate (Lys-8). A Glycyl lysine isopeptide (Lys-Gly) (interchain with G-Cter in ubiquitin); alternate cross-link involves residue Lys-8. Thr-9 carries the phosphothreonine modification. 2 positions are modified to N6-acetyllysine: Lys-34 and Lys-75. Ser-93 bears the Phosphoserine mark.

It belongs to the universal ribosomal protein uS10 family. In terms of assembly, component of the 40S small ribosomal subunit. Polyubiquitinated by ZNF598 via 'Lys-63'-linked ubiquitin chains when a ribosome has stalled, initiating the ribosome quality control (RQC) pathway to degrade the potentially detrimental aberrant nascent polypeptide. Deubiquitinated by OTUD3 and USP21, antagonizing ZNF598 activity. Post-translationally, ufmylated by UFL1.

The protein localises to the cytoplasm. Functionally, component of the small ribosomal subunit. The ribosome is a large ribonucleoprotein complex responsible for the synthesis of proteins in the cell. The chain is Small ribosomal subunit protein uS10 (RPS20) from Pongo abelii (Sumatran orangutan).